The primary structure comprises 221 residues: NADH-ubiquinone oxidoreductase chain 4 (221 aa).

5 helical membrane-spanning segments follow: residues alanine 20–methionine 40, leucine 45–leucine 65, leucine 78–leucine 98, isoleucine 121–alanine 141, and phenylalanine 170–cysteine 190.

The protein belongs to the complex I subunit 4 family.

It localises to the mitochondrion membrane. The enzyme catalyses a ubiquinone + NADH + 5 H(+)(in) = a ubiquinol + NAD(+) + 4 H(+)(out). Core subunit of the mitochondrial membrane respiratory chain NADH dehydrogenase (Complex I) that is believed to belong to the minimal assembly required for catalysis. Complex I functions in the transfer of electrons from NADH to the respiratory chain. The immediate electron acceptor for the enzyme is believed to be ubiquinone. This chain is NADH-ubiquinone oxidoreductase chain 4 (ND4), found in Anopheles arabiensis (Mosquito).